A 101-amino-acid chain; its full sequence is DNA-binding protein HU (101 aa).

Belongs to the bacterial histone-like protein family. Homodimer.

Functionally, histone-like DNA-binding protein which is capable of wrapping DNA to stabilize it, and thus to prevent its denaturation under extreme environmental conditions. The chain is DNA-binding protein HU (hup) from Rickettsia bellii (strain RML369-C).